Reading from the N-terminus, the 117-residue chain is MAEVHNQLEIKFRLTDGSDIGPKAFPDATTVSALKETVISEWPREKENGPKTVKEVKLISAGKVLENSKTVKDYRSPVSNLAGAVTTMHVIIQAPVTEKEKKPKGDPKMNKCVCSVM.

Residues 8–74 (LEIKFRLTDG…LENSKTVKDY (67 aa)) form the Ubiquitin-like domain. Cysteine 112 is lipidated: S-palmitoyl cysteine. Cysteine 114 carries the post-translational modification Cysteine methyl ester. Cysteine 114 is lipidated: S-farnesyl cysteine. The propeptide at 115 to 117 (SVM) is removed in mature form.

Its subcellular location is the cell membrane. Functionally, may serve as docking site to facilitate the association of other proteins to the plasma membrane. This chain is Membrane-anchored ubiquitin-fold protein 1 (MUB1), found in Arabidopsis thaliana (Mouse-ear cress).